The following is a 404-amino-acid chain: S-adenosylmethionine synthase (404 aa).

ATP is bound at residue histidine 18. Aspartate 20 contributes to the Mg(2+) binding site. A K(+)-binding site is contributed by glutamate 46. L-methionine-binding residues include glutamate 59 and glutamine 102. Residues 102-112 (QSPEIAQGVDH) form a flexible loop region. ATP is bound by residues 178–180 (DGK), 249–250 (KF), aspartate 258, 264–265 (RK), alanine 281, and lysine 285. Aspartate 258 is an L-methionine binding site. Lysine 289 contributes to the L-methionine binding site.

It belongs to the AdoMet synthase family. As to quaternary structure, homotetramer; dimer of dimers. Mg(2+) serves as cofactor. Requires K(+) as cofactor.

It is found in the cytoplasm. It carries out the reaction L-methionine + ATP + H2O = S-adenosyl-L-methionine + phosphate + diphosphate. The protein operates within amino-acid biosynthesis; S-adenosyl-L-methionine biosynthesis; S-adenosyl-L-methionine from L-methionine: step 1/1. Catalyzes the formation of S-adenosylmethionine (AdoMet) from methionine and ATP. The overall synthetic reaction is composed of two sequential steps, AdoMet formation and the subsequent tripolyphosphate hydrolysis which occurs prior to release of AdoMet from the enzyme. The polypeptide is S-adenosylmethionine synthase (Rhodococcus opacus (strain B4)).